The chain runs to 235 residues: Aspartate/glutamate leucyltransferase (235 aa).

This sequence belongs to the R-transferase family. Bpt subfamily.

It localises to the cytoplasm. The enzyme catalyses N-terminal L-glutamyl-[protein] + L-leucyl-tRNA(Leu) = N-terminal L-leucyl-L-glutamyl-[protein] + tRNA(Leu) + H(+). It catalyses the reaction N-terminal L-aspartyl-[protein] + L-leucyl-tRNA(Leu) = N-terminal L-leucyl-L-aspartyl-[protein] + tRNA(Leu) + H(+). In terms of biological role, functions in the N-end rule pathway of protein degradation where it conjugates Leu from its aminoacyl-tRNA to the N-termini of proteins containing an N-terminal aspartate or glutamate. The chain is Aspartate/glutamate leucyltransferase from Pseudomonas savastanoi pv. phaseolicola (strain 1448A / Race 6) (Pseudomonas syringae pv. phaseolicola (strain 1448A / Race 6)).